Here is a 379-residue protein sequence, read N- to C-terminus: Cytochrome b (379 aa).

The next 4 membrane-spanning stretches (helical) occupy residues 33–53 (FGSLLGMCLVLQIFTGLFLAM), 77–98 (WLIRYMHANGASLFFICLYIHI), 113–133 (WNIGILLLFLTMATAFVGYVL), and 178–198 (FFAFHFILPFIIAALATVHLL). 2 residues coordinate heme b: His-83 and His-97. The heme b site is built by His-182 and His-196. Residue His-201 coordinates a ubiquinone. Helical transmembrane passes span 226–246 (TKDFLGALIXIMFFMTLVLYF), 288–308 (LGGVVALILSILVLALLPYIH), 320–340 (ISQFLFWTLVSDLLLLTWIGG), and 347–367 (FIIIGQTASXMYFTIILIXMX).

It belongs to the cytochrome b family. In terms of assembly, the cytochrome bc1 complex contains 11 subunits: 3 respiratory subunits (MT-CYB, CYC1 and UQCRFS1), 2 core proteins (UQCRC1 and UQCRC2) and 6 low-molecular weight proteins (UQCRH/QCR6, UQCRB/QCR7, UQCRQ/QCR8, UQCR10/QCR9, UQCR11/QCR10 and a cleavage product of UQCRFS1). This cytochrome bc1 complex then forms a dimer. The cofactor is heme b.

Its subcellular location is the mitochondrion inner membrane. Functionally, component of the ubiquinol-cytochrome c reductase complex (complex III or cytochrome b-c1 complex) that is part of the mitochondrial respiratory chain. The b-c1 complex mediates electron transfer from ubiquinol to cytochrome c. Contributes to the generation of a proton gradient across the mitochondrial membrane that is then used for ATP synthesis. This chain is Cytochrome b (MT-CYB), found in Thomomys umbrinus (Southern pocket gopher).